The primary structure comprises 203 residues: Urease accessory protein UreG (203 aa).

12-19 contacts GTP; sequence GPVGSGKT.

The protein belongs to the SIMIBI class G3E GTPase family. UreG subfamily. Homodimer. UreD, UreF and UreG form a complex that acts as a GTP-hydrolysis-dependent molecular chaperone, activating the urease apoprotein by helping to assemble the nickel containing metallocenter of UreC. The UreE protein probably delivers the nickel.

It is found in the cytoplasm. In terms of biological role, facilitates the functional incorporation of the urease nickel metallocenter. This process requires GTP hydrolysis, probably effectuated by UreG. The sequence is that of Urease accessory protein UreG from Nitrosococcus oceani (strain ATCC 19707 / BCRC 17464 / JCM 30415 / NCIMB 11848 / C-107).